The primary structure comprises 75 residues: CDC42 small effector protein 2-C (75 aa).

2 S-palmitoyl cysteine lipidation sites follow: Cys10 and Cys11. In terms of domain architecture, CRIB spans 29-42; the sequence is IGEPMNFVHTAHVG.

It belongs to the CDC42SE/SPEC family.

The protein resides in the cytoplasm. It localises to the cytoskeleton. Its subcellular location is the cell membrane. Probably involved in the organization of the actin cytoskeleton by acting downstream of CDC42, inducing actin filament assembly. The sequence is that of CDC42 small effector protein 2-C (cdc42se2-c) from Xenopus laevis (African clawed frog).